The following is a 59-amino-acid chain: Early growth response protein 1 (59 aa).

3 C2H2-type zinc fingers span residues 1 to 18 (CDRR…IRIH), 24 to 46 (FQCR…IRTH), and 52 to 59 (FACDICGR).

Belongs to the EGR C2H2-type zinc-finger protein family.

It is found in the nucleus. The protein resides in the cytoplasm. Functionally, transcriptional regulator. Recognizes and binds to the DNA sequence 5'-GCG(T/G)GGGCG-3'(EGR-site) in the promoter region of target genes. Binds double-stranded target DNA, irrespective of the cytosine methylation status. Regulates the transcription of numerous target genes, and thereby plays an important role in regulating the response to growth factors, DNA damage, and ischemia. Plays a role in the regulation of cell survival, proliferation and cell death. Mediates responses to ischemia and hypoxia; regulates the expression of proteins that are involved in inflammatory processes. Plays a role in regulating the expression of circadian clock genes. This chain is Early growth response protein 1 (EGR1), found in Serinus canaria (Island canary).